A 316-amino-acid polypeptide reads, in one-letter code: Ribosomal RNA small subunit methyltransferase H (316 aa).

Residues 35-37, Asp-55, Phe-79, Asp-101, and Gln-108 each bind S-adenosyl-L-methionine; that span reads GGH.

Belongs to the methyltransferase superfamily. RsmH family.

It localises to the cytoplasm. It carries out the reaction cytidine(1402) in 16S rRNA + S-adenosyl-L-methionine = N(4)-methylcytidine(1402) in 16S rRNA + S-adenosyl-L-homocysteine + H(+). Specifically methylates the N4 position of cytidine in position 1402 (C1402) of 16S rRNA. This chain is Ribosomal RNA small subunit methyltransferase H, found in Vibrio vulnificus (strain CMCP6).